The primary structure comprises 388 residues: MTSVNLGMPAAPQPVLSPRRKTRQIRVGSVGVGSDSPISVQSMTTTPTTNINATLQQIAELNAAGCDIVRVACPSQDDADALPIIAKKSPIPVIADIHFQPKYVYAAIDAGCAGVRVNPGNIRKFDDQIEGISRAAEAAGVSIRIGVNAGSLDKRLLEKYGKATPEALMESAVWEASLFEQHDFHDFKISVKHNDPVTMVRAYQLLAERGDWPLHLGVTEAGPALQGTVKSATAFGILLSQGIGDTIRVSLSAPPVEEVKVGNQILQSLGLRPRKLEIVSCPSCGRAQVDVYKLAEEVNEGLAHLTVPLRVAVMGCVVNGPGEAREADLGVASGNGKGQIFVRGEVIKTVPEDQIVETLLAQANEMAESMELDENGQPVEGAPVVTAG.

Positions 1–22 (MTSVNLGMPAAPQPVLSPRRKT) are disordered. [4Fe-4S] cluster contacts are provided by cysteine 281, cysteine 284, cysteine 316, and glutamate 323.

This sequence belongs to the IspG family. It depends on [4Fe-4S] cluster as a cofactor.

The catalysed reaction is (2E)-4-hydroxy-3-methylbut-2-enyl diphosphate + oxidized [flavodoxin] + H2O + 2 H(+) = 2-C-methyl-D-erythritol 2,4-cyclic diphosphate + reduced [flavodoxin]. Its pathway is isoprenoid biosynthesis; isopentenyl diphosphate biosynthesis via DXP pathway; isopentenyl diphosphate from 1-deoxy-D-xylulose 5-phosphate: step 5/6. Its function is as follows. Converts 2C-methyl-D-erythritol 2,4-cyclodiphosphate (ME-2,4cPP) into 1-hydroxy-2-methyl-2-(E)-butenyl 4-diphosphate. This is 4-hydroxy-3-methylbut-2-en-1-yl diphosphate synthase (flavodoxin) from Kocuria rhizophila (strain ATCC 9341 / DSM 348 / NBRC 103217 / DC2201).